A 1086-amino-acid polypeptide reads, in one-letter code: NAD(P) transhydrogenase, mitochondrial (1086 aa).

A mitochondrion-targeting transit peptide spans 1–43; the sequence is MAHLLKTVVAGCSCPFLSNLGSSKVLPGKRDFVRTLRTHQALW. Residues 44 to 474 lie on the Mitochondrial matrix side of the membrane; it reads CKSPVKPGIP…TVSMYTKTLT (431 aa). K70 bears the N6-acetyllysine mark. The residue at position 117 (K117) is an N6-succinyllysine. 182–184 contacts NAD(+); the sequence is RVT. K224 carries the N6-succinyllysine modification. NAD(+) is bound by residues V237, 257–259, and G287; that span reads DTR. The residue at position 294 (K294) is an N6-succinyllysine. Positions 300 and 319 each coordinate NAD(+). At K331 the chain carries N6-succinyllysine. K397 is subject to N6-acetyllysine. Transmembrane regions (helical) follow at residues 475–493, 501–521, 527–546, and 558–578; these read TASVYSAGLTGMLGLGIVA, MVTTFGLAGIIGYHTVWGVTP, LMSVTNAISGLTAVGGLALM, and SLAALATFISSVNIAGGFLVT. Topologically, residues 579-595 are mitochondrial matrix; the sequence is QRMLDMFKRPTDPPEYN. 5 helical membrane-spanning segments follow: residues 596–616, 622–642, 646–666, 672–691, and 702–722; these read YLYLLPGGTFVGGYLAALYGG, IMYLGSGLCCVGALGGLSTQG, LGNALGMIGVAGGLAATLGGL, LLAQMSGAMAMGGTIGLTIA, and LVAAFHSLVGLAAVLTCMAEY. Topologically, residues 723-739 are cytoplasmic; sequence IVEYPHFAMDATSNFTK. A run of 5 helical transmembrane segments spans residues 740-760, 778-797, 801-819, 833-853, and 857-879; these read IVAYLGTYIGGVTFSGSLVAY, HALNAGLLAASVGGIIPFMA, FTTGITCLGSVSGLSTLMG, VVITVLNSYSGWALCAEGFLL, and LLTIVGALIGSSGAILSYIMCVA. Topologically, residues 880-1086 are mitochondrial matrix; the sequence is MNRSLANVIL…QAKVRESYQK (207 aa). NADP(+) is bound by residues Y933, 965 to 970, 1007 to 1011, 1026 to 1027, 1042 to 1049, and 1068 to 1069; these read VAGRMP, GANDT, GM, KRSLGVGY, and DA. N6-succinyllysine is present on K1079.

The protein in the N-terminal section; belongs to the AlaDH/PNT family. In the C-terminal section; belongs to the PNT beta subunit family. As to quaternary structure, homodimer. In terms of tissue distribution, widely expressed with expression most readily detectable in adrenal, heart, kidney, thyroid and adipose tissues.

The protein resides in the mitochondrion inner membrane. It catalyses the reaction NAD(+) + NADPH + H(+)(in) = NADH + NADP(+) + H(+)(out). The transhydrogenation between NADH and NADP is coupled to respiration and ATP hydrolysis and functions as a proton pump across the membrane. May play a role in reactive oxygen species (ROS) detoxification in the adrenal gland. The protein is NAD(P) transhydrogenase, mitochondrial (Nnt) of Mus musculus (Mouse).